The chain runs to 152 residues: MGLXKSFALFSLLVLVLGWVQPSLSGESRESSADKFKRQHMDPDSPSKSSPTYCNQMMKRQGMTKGSCKRVNTFVHEPLEDVQAICSQGQVTCKNGRNNCYKSSSTLHITECHLKGSSKYPNCDYTTTDSQKHIIIACEGNPLVPVHFDDSV.

The first 25 residues, 1–25 (MGLXKSFALFSLLVLVLGWVQPSLS), serve as a signal peptide directing secretion. The tract at residues 25–53 (SGESRESSADKFKRQHMDPDSPSKSSPTY) is disordered. Over residues 27-45 (ESRESSADKFKRQHMDPDS) the composition is skewed to basic and acidic residues. 2 residues coordinate substrate: lysine 35 and arginine 38. The Proton acceptor role is filled by histidine 40. 4 disulfides stabilise this stretch: cysteine 54/cysteine 112, cysteine 68/cysteine 123, cysteine 86/cysteine 138, and cysteine 93/cysteine 100. Substrate contacts are provided by residues 69–73 (KRVNT) and lysine 94. The active-site Proton donor is the histidine 147.

It belongs to the pancreatic ribonuclease family. Monomer.

It localises to the secreted. It catalyses the reaction an [RNA] containing cytidine + H2O = an [RNA]-3'-cytidine-3'-phosphate + a 5'-hydroxy-ribonucleotide-3'-[RNA].. The enzyme catalyses an [RNA] containing uridine + H2O = an [RNA]-3'-uridine-3'-phosphate + a 5'-hydroxy-ribonucleotide-3'-[RNA].. Functionally, endonuclease that catalyzes the cleavage of RNA on the 3' side of pyrimidine nucleotides. Acts on single-stranded and double-stranded RNA. The sequence is that of Ribonuclease pancreatic beta-type from Rattus tiomanicus (Malayan field rat).